We begin with the raw amino-acid sequence, 119 residues long: Large ribosomal subunit protein uL22 (119 aa).

This sequence belongs to the universal ribosomal protein uL22 family. In terms of assembly, part of the 50S ribosomal subunit.

Functionally, this protein binds specifically to 23S rRNA; its binding is stimulated by other ribosomal proteins, e.g. L4, L17, and L20. It is important during the early stages of 50S assembly. It makes multiple contacts with different domains of the 23S rRNA in the assembled 50S subunit and ribosome. Its function is as follows. The globular domain of the protein is located near the polypeptide exit tunnel on the outside of the subunit, while an extended beta-hairpin is found that lines the wall of the exit tunnel in the center of the 70S ribosome. This Chlorobaculum tepidum (strain ATCC 49652 / DSM 12025 / NBRC 103806 / TLS) (Chlorobium tepidum) protein is Large ribosomal subunit protein uL22.